Reading from the N-terminus, the 214-residue chain is Pyridoxine/pyridoxamine 5'-phosphate oxidase (214 aa).

Substrate is bound by residues 8–11 and K67; that span reads RKSY. Residues 62-67, 77-78, K84, and Q106 contribute to the FMN site; these read RVVLLK and YT. Residues Y124, R128, and S132 each contribute to the substrate site. Residues 141–142 and W186 each bind FMN; that span reads QS. Position 192 to 194 (192 to 194) interacts with substrate; the sequence is RLH. Residue R196 participates in FMN binding.

It belongs to the pyridoxamine 5'-phosphate oxidase family. As to quaternary structure, homodimer. FMN serves as cofactor.

It catalyses the reaction pyridoxamine 5'-phosphate + O2 + H2O = pyridoxal 5'-phosphate + H2O2 + NH4(+). It carries out the reaction pyridoxine 5'-phosphate + O2 = pyridoxal 5'-phosphate + H2O2. Its pathway is cofactor metabolism; pyridoxal 5'-phosphate salvage; pyridoxal 5'-phosphate from pyridoxamine 5'-phosphate: step 1/1. The protein operates within cofactor metabolism; pyridoxal 5'-phosphate salvage; pyridoxal 5'-phosphate from pyridoxine 5'-phosphate: step 1/1. Catalyzes the oxidation of either pyridoxine 5'-phosphate (PNP) or pyridoxamine 5'-phosphate (PMP) into pyridoxal 5'-phosphate (PLP). This Flavobacterium psychrophilum (strain ATCC 49511 / DSM 21280 / CIP 103535 / JIP02/86) protein is Pyridoxine/pyridoxamine 5'-phosphate oxidase.